Consider the following 361-residue polypeptide: Phosphate acyltransferase (361 aa).

Positions 342–361 are disordered; the sequence is ADGAAAEQGPTPRRTAPRQT.

Belongs to the PlsX family. Homodimer. Probably interacts with PlsY.

It localises to the cytoplasm. The catalysed reaction is a fatty acyl-[ACP] + phosphate = an acyl phosphate + holo-[ACP]. Its pathway is lipid metabolism; phospholipid metabolism. In terms of biological role, catalyzes the reversible formation of acyl-phosphate (acyl-PO(4)) from acyl-[acyl-carrier-protein] (acyl-ACP). This enzyme utilizes acyl-ACP as fatty acyl donor, but not acyl-CoA. The polypeptide is Phosphate acyltransferase (Anaeromyxobacter sp. (strain K)).